Reading from the N-terminus, the 387-residue chain is Probable serine protease FE772_23060 (387 aa).

Belongs to the peptidase S1 family.

Possibly a dedicated protease for substrate gasdermin bGSDM; cleaves the bGSDM precursor, releasing the pore-forming moiety, which integrates into the membrane and triggers cell death. Involved in defense against bacteriophages. When this probable 4 gene operon (bGSDM-FE772_23060-FE772_23065-FE772_23070) is inserted into E.coli it provides nearly 100-fold protection against phages T5 and T6 and about 8-fold against phage T4. The operon without bGSDM no longer protects against phage. In Lysobacter enzymogenes, this protein is Probable serine protease FE772_23060.